The chain runs to 295 residues: 4-diphosphocytidyl-2-C-methyl-D-erythritol kinase (295 aa).

The active site involves K22. Residue 106–116 coordinates ATP; the sequence is PAGGGFGGGSS. D148 is a catalytic residue.

It belongs to the GHMP kinase family. IspE subfamily.

It carries out the reaction 4-CDP-2-C-methyl-D-erythritol + ATP = 4-CDP-2-C-methyl-D-erythritol 2-phosphate + ADP + H(+). It functions in the pathway isoprenoid biosynthesis; isopentenyl diphosphate biosynthesis via DXP pathway; isopentenyl diphosphate from 1-deoxy-D-xylulose 5-phosphate: step 3/6. Its function is as follows. Catalyzes the phosphorylation of the position 2 hydroxy group of 4-diphosphocytidyl-2C-methyl-D-erythritol. This chain is 4-diphosphocytidyl-2-C-methyl-D-erythritol kinase, found in Xanthomonas campestris pv. campestris (strain 8004).